We begin with the raw amino-acid sequence, 130 residues long: Small ribosomal subunit protein uS9 (130 aa).

Belongs to the universal ribosomal protein uS9 family.

The protein is Small ribosomal subunit protein uS9 of Lawsonia intracellularis (strain PHE/MN1-00).